The chain runs to 39 residues: Cecropin-D-like peptide (39 aa).

In terms of tissue distribution, hemolymph.

The protein localises to the secreted. In terms of biological role, cecropins have lytic and antibacterial activity against several Gram-positive and Gram-negative bacteria. Has antibacterial activity against the Gram-positive bacteria M.luteus (MIC=34.4 uM), L.monocytogenes (MIC=34.4 uM), and S.lutea (MIC=34.4 uM), and the Gram-negative bacterium E.coli D31 (MIC=8.6 uM). Lacks antibacterial activity against the Gram-positive bacterium B.circulans, and the Gram-negative bacteria E.coli ATCC 25922 and S.typhimurium. Has antifungal activity against A.niger, but lacks antifungal activity against C.albicans, C.wickerhamii, F.oxysporum, P.pastoris, P.tannophilus, S.cerevisiae, T.harzianum, and Z.marxianus. The chain is Cecropin-D-like peptide from Galleria mellonella (Greater wax moth).